A 491-amino-acid polypeptide reads, in one-letter code: Glutamate--tRNA ligase (491 aa).

The 'HIGH' region signature appears at 9-19 (PSPTGTPHVGM). Positions 253–257 (KLSKR) match the 'KMSKS' region motif. Residue Lys-256 participates in ATP binding.

This sequence belongs to the class-I aminoacyl-tRNA synthetase family. Glutamate--tRNA ligase type 1 subfamily. As to quaternary structure, monomer.

The protein localises to the cytoplasm. It carries out the reaction tRNA(Glu) + L-glutamate + ATP = L-glutamyl-tRNA(Glu) + AMP + diphosphate. Its function is as follows. Catalyzes the attachment of glutamate to tRNA(Glu) in a two-step reaction: glutamate is first activated by ATP to form Glu-AMP and then transferred to the acceptor end of tRNA(Glu). The sequence is that of Glutamate--tRNA ligase from Leifsonia xyli subsp. xyli (strain CTCB07).